The chain runs to 168 residues: Endoribonuclease YbeY (168 aa).

Zn(2+) contacts are provided by His-126, His-130, and His-136.

This sequence belongs to the endoribonuclease YbeY family. Zn(2+) is required as a cofactor.

The protein resides in the cytoplasm. Functionally, single strand-specific metallo-endoribonuclease involved in late-stage 70S ribosome quality control and in maturation of the 3' terminus of the 16S rRNA. The sequence is that of Endoribonuclease YbeY from Sinorhizobium medicae (strain WSM419) (Ensifer medicae).